The chain runs to 501 residues: Cytochrome P450 81F4 (501 aa).

Lysine 245 is covalently cross-linked (Glycyl lysine isopeptide (Lys-Gly) (interchain with G-Cter in ubiquitin)). Residues 285–305 (IIIKGLMLGIMVASSETSALT) form a helical membrane-spanning segment. Residue cysteine 435 coordinates heme.

It belongs to the cytochrome P450 family. The cofactor is heme.

It is found in the membrane. Its pathway is secondary metabolite biosynthesis. Functionally, involved in indole glucosinolate biosynthesis. Catalyzes hydroxylation reactions of the glucosinolate indole ring. Converts indol-3-yl-methylglucosinolate (I3M) to 1-hydroxy-indol-3-yl-methylglucosinolate (1OH-I3M) intermediate. This hydroxy intermediates is converted to 1-methoxy-indol-3-yl-methylglucosinolate (1MO-I3M) by indole glucosinolate methyltransferase 1 and 2 (IGMT1 and IGMT2). The polypeptide is Cytochrome P450 81F4 (Arabidopsis thaliana (Mouse-ear cress)).